Consider the following 1705-residue polypeptide: Clathrin heavy chain 1 (1705 aa).

Residue A2 is modified to N-acetylalanine. A globular terminal domain region spans residues 2-492; sequence AAANAPIIMK…VDNDLALKIY (491 aa). WD40-like repeat regions lie at residues 25–67, 68–113, 114–155, 156–205, 206–270, 271–314, and 315–343; these read FITF…RPIT, ADSA…MPEQ, VAFW…ANLA, NNQI…QALE, AHAA…PDFA, DDFP…ISPD, and PIFLTSEASSVGGFYAINRRGQVLLATVN. Residues 462–478 form a binding site for the uncoating ATPase, involved in lattice disassembly region; it reads ENWLAEDKLECSEELGD. A flexible linker region spans residues 493–536; that stretch reads IKARATPKVVAAFAERREFDKILIYSKQVGYTPDYMFLLQTILR. The distal segment stretch occupies residues 537–648; it reads TDPQGAVNFA…QSLKHYSELP (112 aa). The segment at 537–1705 is heavy chain arm; sequence TDPQGAVNFA…PYGMPPMGGY (1169 aa). CHCR repeat units follow at residues 551–697, 700–842, 847–986, 993–1138, 1142–1283, 1288–1434, and 1437–1580; these read QMEG…QIIV, CKEY…PEDF, ILSV…QLID, LPES…VSDA, FIRA…FRLA, LNII…DIIN, and LNVL…KECF. The segment at 653 to 1705 is proximal segment; the sequence is VIVNTHAIEP…PYGMPPMGGY (1053 aa). The segment at 1227–1536 is involved in binding clathrin light chain; it reads AAKIIYAFIS…YIYKKAGRWK (310 aa). The trimerization stretch occupies residues 1564–1705; sequence AEQLLVYFIE…PYGMPPMGGY (142 aa).

Belongs to the clathrin heavy chain family. Clathrin triskelions, composed of 3 heavy chains and 3 light chains, are the basic subunits of the clathrin coat. Interacts with SCYL2B.

It localises to the cytoplasmic vesicle membrane. Its subcellular location is the membrane. The protein localises to the coated pit. In terms of biological role, clathrin is the major protein of the polyhedral coat of coated pits and vesicles. Mediates endocytosis and is required for a correct polar distribution of PIN auxin transporters. The polypeptide is Clathrin heavy chain 1 (Arabidopsis thaliana (Mouse-ear cress)).